A 107-amino-acid chain; its full sequence is Phosphoribosyl-ATP pyrophosphatase (107 aa).

Belongs to the PRA-PH family.

It is found in the cytoplasm. The enzyme catalyses 1-(5-phospho-beta-D-ribosyl)-ATP + H2O = 1-(5-phospho-beta-D-ribosyl)-5'-AMP + diphosphate + H(+). The protein operates within amino-acid biosynthesis; L-histidine biosynthesis; L-histidine from 5-phospho-alpha-D-ribose 1-diphosphate: step 2/9. This Bacillus cereus (strain ATCC 14579 / DSM 31 / CCUG 7414 / JCM 2152 / NBRC 15305 / NCIMB 9373 / NCTC 2599 / NRRL B-3711) protein is Phosphoribosyl-ATP pyrophosphatase.